The sequence spans 215 residues: N-(5'-phosphoribosyl)anthranilate isomerase (215 aa).

It belongs to the TrpF family.

It carries out the reaction N-(5-phospho-beta-D-ribosyl)anthranilate = 1-(2-carboxyphenylamino)-1-deoxy-D-ribulose 5-phosphate. It participates in amino-acid biosynthesis; L-tryptophan biosynthesis; L-tryptophan from chorismate: step 3/5. In Pelodictyon phaeoclathratiforme (strain DSM 5477 / BU-1), this protein is N-(5'-phosphoribosyl)anthranilate isomerase.